A 1072-amino-acid chain; its full sequence is Carbamoyl phosphate synthase large chain (1072 aa).

The interval 1–401 is carboxyphosphate synthetic domain; it reads MPKYKDISKV…SLLKAVRSLE (401 aa). ATP contacts are provided by arginine 129, arginine 169, glycine 175, glycine 176, lysine 208, leucine 210, glutamate 215, glycine 241, valine 242, histidine 243, glutamine 284, and glutamate 298. An ATP-grasp 1 domain is found at 133-327; sequence KRKMQEIGEP…IAKIAAKIAI (195 aa). Positions 284, 298, and 300 each coordinate Mg(2+). Mn(2+) is bound by residues glutamine 284, glutamate 298, and asparagine 300. The tract at residues 402-544 is oligomerization domain; the sequence is IKAYGLRLDS…YIYSTYCEED (143 aa). Residues 545–929 form a carbamoyl phosphate synthetic domain region; the sequence is EVETHDIPKV…ALYKALEGAG (385 aa). The 191-residue stretch at 671–861 folds into the ATP-grasp 2 domain; the sequence is SKLLKELNIN…MVKLAVEVAL (191 aa). ATP-binding residues include arginine 707, lysine 746, isoleucine 748, glutamate 752, glycine 777, valine 778, histidine 779, serine 780, glutamine 820, and glutamate 832. Mg(2+) contacts are provided by glutamine 820, glutamate 832, and asparagine 834. 3 residues coordinate Mn(2+): glutamine 820, glutamate 832, and asparagine 834. The MGS-like domain maps to 930–1072; sequence LKIPKKGKIL…QKDNVKNLVL (143 aa). Residues 930–1072 are allosteric domain; the sequence is LKIPKKGKIL…QKDNVKNLVL (143 aa).

The protein belongs to the CarB family. Composed of two chains; the small (or glutamine) chain promotes the hydrolysis of glutamine to ammonia, which is used by the large (or ammonia) chain to synthesize carbamoyl phosphate. Tetramer of heterodimers (alpha,beta)4. Requires Mg(2+) as cofactor. The cofactor is Mn(2+).

It carries out the reaction hydrogencarbonate + L-glutamine + 2 ATP + H2O = carbamoyl phosphate + L-glutamate + 2 ADP + phosphate + 2 H(+). The catalysed reaction is hydrogencarbonate + NH4(+) + 2 ATP = carbamoyl phosphate + 2 ADP + phosphate + 2 H(+). It participates in amino-acid biosynthesis; L-arginine biosynthesis; carbamoyl phosphate from bicarbonate: step 1/1. It functions in the pathway pyrimidine metabolism; UMP biosynthesis via de novo pathway; (S)-dihydroorotate from bicarbonate: step 1/3. Its function is as follows. Large subunit of the glutamine-dependent carbamoyl phosphate synthetase (CPSase). CPSase catalyzes the formation of carbamoyl phosphate from the ammonia moiety of glutamine, carbonate, and phosphate donated by ATP, constituting the first step of 2 biosynthetic pathways, one leading to arginine and/or urea and the other to pyrimidine nucleotides. The large subunit (synthetase) binds the substrates ammonia (free or transferred from glutamine from the small subunit), hydrogencarbonate and ATP and carries out an ATP-coupled ligase reaction, activating hydrogencarbonate by forming carboxy phosphate which reacts with ammonia to form carbamoyl phosphate. This is Carbamoyl phosphate synthase large chain from Caldanaerobacter subterraneus subsp. tengcongensis (strain DSM 15242 / JCM 11007 / NBRC 100824 / MB4) (Thermoanaerobacter tengcongensis).